A 177-amino-acid chain; its full sequence is NADH-quinone oxidoreductase subunit E (177 aa).

Residues Cys93, Cys98, Cys134, and Cys138 each coordinate [2Fe-2S] cluster.

The protein belongs to the complex I 24 kDa subunit family. It depends on [2Fe-2S] cluster as a cofactor.

The catalysed reaction is a quinone + NADH + 5 H(+)(in) = a quinol + NAD(+) + 4 H(+)(out). Its function is as follows. NDH-1 shuttles electrons from NADH, via FMN and iron-sulfur (Fe-S) centers, to quinones in the respiratory chain. Couples the redox reaction to proton translocation (for every two electrons transferred, four hydrogen ions are translocated across the cytoplasmic membrane), and thus conserves the redox energy in a proton gradient. This Rickettsia prowazekii (strain Madrid E) protein is NADH-quinone oxidoreductase subunit E (nuoE).